Reading from the N-terminus, the 360-residue chain is Peptide chain release factor 1 (360 aa).

The residue at position 235 (Q235) is an N5-methylglutamine. The tract at residues 284 to 313 is disordered; the sequence is AKRQQAEASTRRNLLGSGDRSDRNRTYNFP.

It belongs to the prokaryotic/mitochondrial release factor family. Post-translationally, methylated by PrmC. Methylation increases the termination efficiency of RF1.

Its subcellular location is the cytoplasm. Its function is as follows. Peptide chain release factor 1 directs the termination of translation in response to the peptide chain termination codons UAG and UAA. This Salmonella gallinarum (strain 287/91 / NCTC 13346) protein is Peptide chain release factor 1.